Consider the following 459-residue polypeptide: ATP-dependent protease ATPase subunit HslU (459 aa).

Residues valine 18, 60–65, aspartate 272, glutamate 337, and arginine 409 contribute to the ATP site; that span reads GVGKTE.

It belongs to the ClpX chaperone family. HslU subfamily. In terms of assembly, a double ring-shaped homohexamer of HslV is capped on each side by a ring-shaped HslU homohexamer. The assembly of the HslU/HslV complex is dependent on binding of ATP.

Its subcellular location is the cytoplasm. Functionally, ATPase subunit of a proteasome-like degradation complex; this subunit has chaperone activity. The binding of ATP and its subsequent hydrolysis by HslU are essential for unfolding of protein substrates subsequently hydrolyzed by HslV. HslU recognizes the N-terminal part of its protein substrates and unfolds these before they are guided to HslV for hydrolysis. In Thermoanaerobacter pseudethanolicus (strain ATCC 33223 / 39E) (Clostridium thermohydrosulfuricum), this protein is ATP-dependent protease ATPase subunit HslU.